We begin with the raw amino-acid sequence, 118 residues long: Large ribosomal subunit protein bL20 (118 aa).

The protein belongs to the bacterial ribosomal protein bL20 family.

In terms of biological role, binds directly to 23S ribosomal RNA and is necessary for the in vitro assembly process of the 50S ribosomal subunit. It is not involved in the protein synthesizing functions of that subunit. This Kosmotoga olearia (strain ATCC BAA-1733 / DSM 21960 / TBF 19.5.1) protein is Large ribosomal subunit protein bL20.